A 347-amino-acid polypeptide reads, in one-letter code: Haptoglobin (347 aa).

The N-terminal stretch at 1–18 (MSALGAVIALLLWGQLFA) is a signal peptide. The region spanning 31–88 (DGCPKPPQIAHGYVEHSVRYQCKNYYRLRTEGDGVYTLNSEKQWINKAVGDKLPECEA) is the Sushi domain. Cystine bridges form between cysteine 52–cysteine 86, cysteine 90–cysteine 207, cysteine 250–cysteine 281, and cysteine 292–cysteine 322. The 245-residue stretch at 103-347 (ILGGHLDAKG…DWVQKTIAKN (245 aa)) folds into the Peptidase S1 domain. N-linked (GlcNAc...) asparagine glycosylation is found at asparagine 125, asparagine 148, asparagine 152, and asparagine 182. Positions 259–264 (VPEKKT) are interaction with CD163.

It belongs to the peptidase S1 family. In terms of assembly, tetramer of two alpha and two beta chains; disulfide-linked. The hemoglobin/haptoglobin complex is composed of a haptoglobin dimer bound to two hemoglobin alpha-beta dimers. Interacts with CD163. Interacts with ERGIC3.

It is found in the secreted. As a result of hemolysis, hemoglobin is found to accumulate in the kidney and is secreted in the urine. Haptoglobin captures, and combines with free plasma hemoglobin to allow hepatic recycling of heme iron and to prevent kidney damage. Haptoglobin also acts as an antioxidant, has antibacterial activity and plays a role in modulating many aspects of the acute phase response. Hemoglobin/haptoglobin complexes are rapidly cleared by the macrophage CD163 scavenger receptor expressed on the surface of liver Kupfer cells through an endocytic lysosomal degradation pathway. The protein is Haptoglobin (HP) of Pongo abelii (Sumatran orangutan).